A 135-amino-acid chain; its full sequence is MSSTQAQASKTLYGERVIAEGELICFDNPRPERPYEISIELPEFTCQCPFSGYPDFAVLRLLYQPGSRVIELKAIKLYVNSYRNCTISHEEAANKILDDLVVACNPVWMQLEADFNPRGNVHTVVRVSHGSRQPC.

The active-site Thioimide intermediate is Cys-48. Catalysis depends on Asp-55, which acts as the Proton donor. Substrate-binding positions include 70-72 (IEL) and 89-90 (HE).

This sequence belongs to the GTP cyclohydrolase I family. QueF type 1 subfamily.

It is found in the cytoplasm. The catalysed reaction is 7-aminomethyl-7-carbaguanine + 2 NADP(+) = 7-cyano-7-deazaguanine + 2 NADPH + 3 H(+). The protein operates within tRNA modification; tRNA-queuosine biosynthesis. Its function is as follows. Catalyzes the NADPH-dependent reduction of 7-cyano-7-deazaguanine (preQ0) to 7-aminomethyl-7-deazaguanine (preQ1). This is NADPH-dependent 7-cyano-7-deazaguanine reductase from Prochlorococcus marinus (strain MIT 9313).